Reading from the N-terminus, the 147-residue chain is Ribosome maturation factor RimP (147 aa).

It belongs to the RimP family.

It localises to the cytoplasm. Functionally, required for maturation of 30S ribosomal subunits. The sequence is that of Ribosome maturation factor RimP from Legionella pneumophila (strain Paris).